A 255-amino-acid polypeptide reads, in one-letter code: Type III pantothenate kinase (255 aa).

7–14 serves as a coordination point for ATP; that stretch reads DVGNTRLK. Substrate is bound by residues Tyr96 and 103–106; that span reads GADR. Asp105 acts as the Proton acceptor in catalysis. Residue Thr133 participates in ATP binding. Thr183 provides a ligand contact to substrate.

Belongs to the type III pantothenate kinase family. Homodimer. The cofactor is NH4(+). K(+) is required as a cofactor.

It localises to the cytoplasm. It catalyses the reaction (R)-pantothenate + ATP = (R)-4'-phosphopantothenate + ADP + H(+). The protein operates within cofactor biosynthesis; coenzyme A biosynthesis; CoA from (R)-pantothenate: step 1/5. In terms of biological role, catalyzes the phosphorylation of pantothenate (Pan), the first step in CoA biosynthesis. The sequence is that of Type III pantothenate kinase from Albidiferax ferrireducens (strain ATCC BAA-621 / DSM 15236 / T118) (Rhodoferax ferrireducens).